Consider the following 912-residue polypeptide: Metabotropic glutamate receptor 4 (912 aa).

Positions 1 to 32 are cleaved as a signal peptide; that stretch reads MSGKGGWAWWWARLPLCLLLSLYGSWVPSSLG. The Extracellular segment spans residues 33–586; it reads KPKGHPHMNS…PIVKLEWDSP (554 aa). A disulfide bond links Cys67 and Cys109. An N-linked (GlcNAc...) asparagine glycan is attached at Asn98. Residues Ser159, 180–182, and Tyr230 contribute to the L-glutamate site; that span reads AST. Cystine bridges form between Cys249–Cys538, Cys372–Cys388, Cys428–Cys435, Cys520–Cys539, Cys524–Cys542, Cys545–Cys557, and Cys560–Cys573. Asn301 is a glycosylation site (N-linked (GlcNAc...) asparagine). Asp312 contacts L-glutamate. Residue Lys405 coordinates L-glutamate. The helical transmembrane segment at 587–607 threads the bilayer; sequence WAVLPLFLAVVGIAATLFVVV. Residues 608–624 are Cytoplasmic-facing; it reads TFVRYNDTPIVKASGRE. Residues 625 to 645 traverse the membrane as a helical segment; the sequence is LSYVLLAGIFLCYATTFLMIA. Residues 646–653 lie on the Extracellular side of the membrane; the sequence is EPDLGTCS. The chain crosses the membrane as a helical span at residues 654–671; sequence LRRIFLGLGMSISYAALL. Topologically, residues 672–699 are cytoplasmic; that stretch reads TKTNRIYRIFEQGKRSVSAPRFISPASQ. The chain crosses the membrane as a helical span at residues 700-720; sequence LAITFVLISLQLLCICVWFVV. Over 721–751 the chain is Extracellular; it reads DPSHSVVDFQDQRTLDPRFARGVLKCDISDL. The helical transmembrane segment at 752–772 threads the bilayer; it reads SLICLLGYSMLLMVTCTVYAI. Residues 773 to 786 are Cytoplasmic-facing; sequence KTRGVPETFNEAKP. A helical transmembrane segment spans residues 787–807; sequence IGFTMYTTCIVWLAFIPIFFG. At 808–826 the chain is on the extracellular side; the sequence is TSQSADKLYIQTTTLTVSV. The helical transmembrane segment at 827–847 threads the bilayer; sequence SLSASVSLGMLYMPKVYIILF. The Cytoplasmic segment spans residues 848–912; it reads HPEQNVPKRK…TYVTYTNHAI (65 aa).

The protein belongs to the G-protein coupled receptor 3 family. As to quaternary structure, interacts with PICK1.

Its subcellular location is the cell membrane. Its function is as follows. G-protein coupled receptor for glutamate. Ligand binding causes a conformation change that triggers signaling via guanine nucleotide-binding proteins (G proteins) and modulates the activity of down-stream effectors. Signaling inhibits adenylate cyclase activity. The chain is Metabotropic glutamate receptor 4 (Grm4) from Mus musculus (Mouse).